The primary structure comprises 183 residues: Ras-related protein Rap-2a (183 aa).

10–17 (GSGGVGKS) serves as a coordination point for GTP. Positions 32–40 (YDPTIEDFY) match the Effector region motif. GTP is bound by residues 57–61 (DTAGT) and 116–119 (NKVD). 2 S-palmitoyl cysteine lipidation sites follow: cysteine 176 and cysteine 177. Cysteine 180 is modified (cysteine methyl ester). Cysteine 180 carries the S-farnesyl cysteine lipid modification. Residues 181 to 183 (NIQ) constitute a propeptide, removed in mature form.

It belongs to the small GTPase superfamily. Ras family. As to quaternary structure, interacts with PLCE1. Interacts with ARHGAP29, SGSM1, SGSM2 and SGSM3. Interacts (GTP-bound form preferentially) with MAP4K4. Interacts with MINK1. Interacts with cytoskeletal actin. Interacts (GTP-bound form) with RUNDC3A. Interacts (GTP-bound form preferentially) with TNIK (via the CNH domain); the interaction is direct and recruits RAP2A to the E3 ubiquitin ligase NEDD4. Interacts with RGS14; the interaction is GTP-dependent. Post-translationally, ubiquitinated; undergoes 'Lys-63' monoubiquitination and diubiquitination by NEDD4. Multiple lysine residues are probably modified. Ubiquitination requires TNIK, prevents interaction with effectors and inactivates RAP2A. Ubiquitination by the ECS(RAB40B) complex leads to RAP2A localization to lamellipodia plasma membrane, activation, and regulation of sorting at early endosomes for recycling to the lamellipodia plasma membrane. In terms of processing, palmitoylated. Palmitoylation is required for association with recycling endosome membranes and activation of TNIK. As to expression, expressed in granular layer of the cerebellum, forebrain, striatum, layer V of the cortex, olfactory cortex, tubercules, subthalamic and hippocampus, particularly in the CA2 region, to a lesser extent in the CA1 region and the external layer of the dentate gyrus. Expressed in neurons.

It is found in the midbody. The protein resides in the cell projection. The protein localises to the lamellipodium membrane. It localises to the golgi apparatus. Its subcellular location is the recycling endosome membrane. It is found in the lysosome. The enzyme catalyses GTP + H2O = GDP + phosphate + H(+). Activated by the guanine nucleotide-exchange factors RAPGEF3 and RAPGEF4 in a cAMP-dependent manner. Nucleotide exchange is also specifically stimulated by RAPGEF5, RASGEF1A and RASGEF1B. Small GTP-binding protein which cycles between a GDP-bound inactive and a GTP-bound active form. In its active form interacts with and regulates several effectors including MAP4K4, MINK1 and TNIK. Part of a signaling complex composed of NEDD4, RAP2A and TNIK which regulates neuronal dendrite extension and arborization during development. More generally, it is part of several signaling cascades and may regulate cytoskeletal rearrangements, cell migration, cell adhesion and cell spreading. The protein is Ras-related protein Rap-2a of Mus musculus (Mouse).